A 206-amino-acid chain; its full sequence is MRGKLITLEGIDGSGKSTVAKKLQENSELRVFEPVFTREPTRGTLTGNAVENAIQSDTDQLAELFLFTADHAEHLAKLVKPALEDGKTVISDRYSDSRYAYQGITLKNRLDNPLEWVRDLHRGWTVIPDLTFLFDIEPEIAVKRCGKRGEQTKFEKIEFLRGVRELFLGLAAEEPERFVIVDASGSPEDVEKAVVQKILDFVQRIE.

10-17 lines the ATP pocket; the sequence is GIDGSGKS.

It belongs to the thymidylate kinase family.

The enzyme catalyses dTMP + ATP = dTDP + ADP. The chain is Probable thymidylate kinase from Methanosarcina acetivorans (strain ATCC 35395 / DSM 2834 / JCM 12185 / C2A).